A 490-amino-acid chain; its full sequence is Protein twist (490 aa).

Disordered stretches follow at residues Gln-48 to Gln-74, Pro-98 to Ser-167, and Leu-330 to Glu-359. Positions Gln-54–Gln-64 are enriched in basic residues. 2 stretches are compositionally biased toward low complexity: residues His-65 to Gln-74 and Ser-104 to Ser-135. Residues Ala-339 to Pro-351 show a composition bias toward basic residues. In terms of domain architecture, bHLH spans Asn-362–Leu-413.

Efficient DNA binding requires dimerization with another bHLH protein. Homodimer.

The protein localises to the nucleus. Functionally, involved in the establishment and dorsoventral patterning of germ layers in the embryo. The sequence is that of Protein twist from Drosophila erecta (Fruit fly).